Here is a 669-residue protein sequence, read N- to C-terminus: Acetyl-coenzyme A synthetase (669 aa).

Residues 211-214 and Thr329 contribute to the CoA site; that span reads RGGK. Residues 404–406, 428–433, Asp519, and Arg534 each bind ATP; these read GEP and DTYWQT. Ser542 provides a ligand contact to CoA. Arg545 contacts ATP. Arg602 serves as a coordination point for CoA.

It belongs to the ATP-dependent AMP-binding enzyme family.

It catalyses the reaction acetate + ATP + CoA = acetyl-CoA + AMP + diphosphate. It participates in ketone degradation; acetoin degradation. It functions in the pathway antibiotic biosynthesis; penicillin biosynthesis. The chain is Acetyl-coenzyme A synthetase (facA) from Penicillium chrysogenum (Penicillium notatum).